A 367-amino-acid polypeptide reads, in one-letter code: Dihydroorotate dehydrogenase (quinone) (367 aa).

FMN is bound by residues 67-71 (AGFDK) and Thr91. Lys71 contributes to the substrate binding site. 116-120 (NRLGF) contacts substrate. FMN-binding residues include Asn145 and Asn178. Asn178 contacts substrate. Ser181 serves as the catalytic Nucleophile. Asn183 lines the substrate pocket. 2 residues coordinate FMN: Lys219 and Thr247. 248-249 (NT) contributes to the substrate binding site. Residues Gly269, Gly298, and 319-320 (YT) each bind FMN.

Belongs to the dihydroorotate dehydrogenase family. Type 2 subfamily. Monomer. FMN serves as cofactor.

The protein localises to the cell membrane. The enzyme catalyses (S)-dihydroorotate + a quinone = orotate + a quinol. It functions in the pathway pyrimidine metabolism; UMP biosynthesis via de novo pathway; orotate from (S)-dihydroorotate (quinone route): step 1/1. In terms of biological role, catalyzes the conversion of dihydroorotate to orotate with quinone as electron acceptor. This chain is Dihydroorotate dehydrogenase (quinone), found in Roseiflexus castenholzii (strain DSM 13941 / HLO8).